The chain runs to 470 residues: Siroheme synthase (470 aa).

The precorrin-2 dehydrogenase /sirohydrochlorin ferrochelatase stretch occupies residues 1-203 (MEFFPIFLKL…GDEAAARAEM (203 aa)). NAD(+) contacts are provided by residues 22-23 (EV) and 43-44 (PE). A Phosphoserine modification is found at S128. Positions 216–470 (GAVYLVGAGP…ENSAVTIQED (255 aa)) are uroporphyrinogen-III C-methyltransferase. P225 is a binding site for S-adenosyl-L-methionine. D248 acts as the Proton acceptor in catalysis. The Proton donor role is filled by K270. Residues 301 to 303 (GGD), M383, and A412 contribute to the S-adenosyl-L-methionine site.

It in the N-terminal section; belongs to the precorrin-2 dehydrogenase / sirohydrochlorin ferrochelatase family. This sequence in the C-terminal section; belongs to the precorrin methyltransferase family.

The enzyme catalyses uroporphyrinogen III + 2 S-adenosyl-L-methionine = precorrin-2 + 2 S-adenosyl-L-homocysteine + H(+). The catalysed reaction is precorrin-2 + NAD(+) = sirohydrochlorin + NADH + 2 H(+). It carries out the reaction siroheme + 2 H(+) = sirohydrochlorin + Fe(2+). It participates in cofactor biosynthesis; adenosylcobalamin biosynthesis; precorrin-2 from uroporphyrinogen III: step 1/1. Its pathway is cofactor biosynthesis; adenosylcobalamin biosynthesis; sirohydrochlorin from precorrin-2: step 1/1. It functions in the pathway porphyrin-containing compound metabolism; siroheme biosynthesis; precorrin-2 from uroporphyrinogen III: step 1/1. The protein operates within porphyrin-containing compound metabolism; siroheme biosynthesis; siroheme from sirohydrochlorin: step 1/1. It participates in porphyrin-containing compound metabolism; siroheme biosynthesis; sirohydrochlorin from precorrin-2: step 1/1. Multifunctional enzyme that catalyzes the SAM-dependent methylations of uroporphyrinogen III at position C-2 and C-7 to form precorrin-2 via precorrin-1. Then it catalyzes the NAD-dependent ring dehydrogenation of precorrin-2 to yield sirohydrochlorin. Finally, it catalyzes the ferrochelation of sirohydrochlorin to yield siroheme. This chain is Siroheme synthase, found in Chromobacterium violaceum (strain ATCC 12472 / DSM 30191 / JCM 1249 / CCUG 213 / NBRC 12614 / NCIMB 9131 / NCTC 9757 / MK).